Here is a 211-residue protein sequence, read N- to C-terminus: Transcriptional regulator GfcR (211 aa).

This sequence belongs to the purine/pyrimidine phosphoribosyltransferase family. GfcR subfamily.

This chain is Transcriptional regulator GfcR, found in Methanocaldococcus jannaschii (strain ATCC 43067 / DSM 2661 / JAL-1 / JCM 10045 / NBRC 100440) (Methanococcus jannaschii).